We begin with the raw amino-acid sequence, 270 residues long: Probable feruloyl esterase C (270 aa).

Residues 1–21 form the signal peptide; sequence MIKSIILQAIMVLSTLTSVHG. Asn23 carries an N-linked (GlcNAc...) asparagine glycan.

Belongs to the faeC family.

The protein resides in the secreted. It catalyses the reaction feruloyl-polysaccharide + H2O = ferulate + polysaccharide.. Functionally, involved in degradation of plant cell walls. Hydrolyzes the feruloyl-arabinose ester bond in arabinoxylans, and the feruloyl-galactose ester bond in pectin. Active against paranitrophenyl-acetate, methyl ferulate and wheat arabinoxylan. The sequence is that of Probable feruloyl esterase C (faeC) from Aspergillus flavus (strain ATCC 200026 / FGSC A1120 / IAM 13836 / NRRL 3357 / JCM 12722 / SRRC 167).